A 195-amino-acid polypeptide reads, in one-letter code: Holliday junction branch migration complex subunit RuvA (195 aa).

Residues 1-66 (MNYLIFKVIY…LIIKDLYGFR (66 aa)) are domain I. The interval 67–141 (TYNERLLFID…KYINKVNDKN (75 aa)) is domain II. Position 141 (Asn-141) is a region of interest, flexible linker. The domain III stretch occupies residues 141–195 (NNWAKELSIGLENLGYTKKDIEYAITKVKINSQQDIDISEIISSAIKEISLRHEN).

It belongs to the RuvA family. Homotetramer. Forms an RuvA(8)-RuvB(12)-Holliday junction (HJ) complex. HJ DNA is sandwiched between 2 RuvA tetramers; dsDNA enters through RuvA and exits via RuvB. An RuvB hexamer assembles on each DNA strand where it exits the tetramer. Each RuvB hexamer is contacted by two RuvA subunits (via domain III) on 2 adjacent RuvB subunits; this complex drives branch migration. In the full resolvosome a probable DNA-RuvA(4)-RuvB(12)-RuvC(2) complex forms which resolves the HJ.

It localises to the cytoplasm. The RuvA-RuvB-RuvC complex processes Holliday junction (HJ) DNA during genetic recombination and DNA repair, while the RuvA-RuvB complex plays an important role in the rescue of blocked DNA replication forks via replication fork reversal (RFR). RuvA specifically binds to HJ cruciform DNA, conferring on it an open structure. The RuvB hexamer acts as an ATP-dependent pump, pulling dsDNA into and through the RuvAB complex. HJ branch migration allows RuvC to scan DNA until it finds its consensus sequence, where it cleaves and resolves the cruciform DNA. The sequence is that of Holliday junction branch migration complex subunit RuvA from Ureaplasma parvum serovar 3 (strain ATCC 27815 / 27 / NCTC 11736).